Consider the following 493-residue polypeptide: GPI alpha-1,6-mannosyltransferase 2 (493 aa).

The Cytoplasmic portion of the chain corresponds to 1-13 (MWPQDPSRKEVLR). A helical membrane pass occupies residues 14 to 34 (FAVSCRILTLMLQALFNAIIP). Residues 35–77 (DHHAEAFSPPRLAPSGFVDQLVEGLLGGLSHWDAEHFLFIAEH) are Lumenal-facing. A helical membrane pass occupies residues 78–98 (GYLYEHNFAFFPGFPLALLVG). The Cytoplasmic portion of the chain corresponds to 99 to 113 (TELLRPLRGLLSLRS). A helical membrane pass occupies residues 114 to 134 (CLLISVASLNFLFFMLAAVAL). Residues 135-136 (HD) are Lumenal-facing. Residues 137 to 157 (LGCLVLHCPHQSFYAALLFCL) form a helical membrane-spanning segment. The Cytoplasmic portion of the chain corresponds to 158–161 (SPAN). The helical transmembrane segment at 162–182 (VFLAAGYSEALFALLTFSAMG) threads the bilayer. At 183–192 (QLERGRVWTS) the chain is on the lumenal side. A helical transmembrane segment spans residues 193 to 213 (VLLFAFATGVRSNGLVSVGFL). The Cytoplasmic portion of the chain corresponds to 214–234 (MHSQCQGFFSSLTMLNPLRQL). A helical membrane pass occupies residues 235–255 (FKLMASLFLSVFTLGLPFALF). Residues 256 to 327 (QYYAYTQFCL…KYYELKQVPN (72 aa)) lie on the Lumenal side of the membrane. Residues 328–348 (FLLAAPVAILVAWATWTYVTT) traverse the membrane as a helical segment. Over 349 to 378 (HPWLCLTLGLQRSKNNKTLEKPDLGFLSPQ) the chain is Cytoplasmic. Residues 379-399 (VFVYVVHAAVLLLFGGLCMHV) form a helical membrane-spanning segment. Residues 400-469 (QVLTRFLGSS…HWKTCSPVTR (70 aa)) lie on the Lumenal side of the membrane. A helical membrane pass occupies residues 470–490 (YILGYFLTYWLLGLLLHCNFL). At 491 to 493 (PWT) the chain is on the cytoplasmic side.

It belongs to the PIGV family. Post-translationally, not N-glycosylated.

The protein resides in the endoplasmic reticulum membrane. It functions in the pathway glycolipid biosynthesis; glycosylphosphatidylinositol-anchor biosynthesis. Alpha-1,6-mannosyltransferase that catalyzes the transfer of the second mannose, via an alpha-1,6 bond, from a dolichol-phosphate-mannose (Dol-P-Man) to the alpha-D-Man-(1-&gt;4)-alpha-D-GlcN-(1-&gt;6)-(1-radyl,2-acyl-sn-glycero-3-phospho)-2-acyl-inositol (also termed H2) intermediate to generate an alpha-D-Man-(1-&gt;6)-alpha-D-Man-(1-&gt;4)-alpha-D-GlcN-(1-&gt;6)-(1-radyl,2-acyl-sn-glycero-3-phospho)-2-acyl-inositol (also termed H3) and participates in the seventh step of the glycosylphosphatidylinositol-anchor biosynthesis. Also transfers the second mannose on a 2-PEtn-alpha-D-Man-(1-&gt;4)-alpha-D-GlcN-(1-&gt;6)-(1-radyl,2-acyl-sn-glycero-3-phospho)-2-acyl-inositol (also termed H5). The sequence is that of GPI alpha-1,6-mannosyltransferase 2 from Homo sapiens (Human).